We begin with the raw amino-acid sequence, 163 residues long: Protein-export protein SecB (163 aa).

This sequence belongs to the SecB family. As to quaternary structure, homotetramer, a dimer of dimers. One homotetramer interacts with 1 SecA dimer.

Its subcellular location is the cytoplasm. In terms of biological role, one of the proteins required for the normal export of preproteins out of the cell cytoplasm. It is a molecular chaperone that binds to a subset of precursor proteins, maintaining them in a translocation-competent state. It also specifically binds to its receptor SecA. The protein is Protein-export protein SecB of Brucella abortus (strain S19).